Consider the following 216-residue polypeptide: Cytochrome c-type protein Cgr1 (216 aa).

A helical membrane pass occupies residues 18–38 (WPIVVGVVVVVLIAAGAGFWV). Heme is bound by residues cysteine 46, cysteine 50, histidine 51, cysteine 95, cysteine 98, histidine 99, cysteine 142, cysteine 147, histidine 148, cysteine 176, cysteine 179, histidine 180, cysteine 190, cysteine 193, and histidine 194.

It belongs to the multiheme cytochrome c family. As to quaternary structure, may form a membrane-associated complex with Cgr2. Post-translationally, binds 5 heme groups per subunit.

Its subcellular location is the cell membrane. Functionally, probably transfers electrons from a membrane-associated electron donor (e.g. the membrane quinone pool) to the [4Fe-4S] cluster of the Cgr2 reductase via its covalently bound heme groups. The protein is Cytochrome c-type protein Cgr1 of Eggerthella lenta (strain ATCC 25559 / DSM 2243 / CCUG 17323 / JCM 9979 / KCTC 3265 / NCTC 11813 / VPI 0255 / 1899 B) (Eubacterium lentum).